Consider the following 262-residue polypeptide: Cytochrome b mRNA maturase bI2 (262 aa).

The protein belongs to the LAGLIDADG endonuclease family.

It is found in the mitochondrion. This protein is responsible for splicing and maturation of cytochrome b mRNA. Specifically, it may be responsible for the splicing specificity of the second intron. The protein is Cytochrome b mRNA maturase bI2 (bI2) of Debaryomyces hansenii (strain ATCC 36239 / CBS 767 / BCRC 21394 / JCM 1990 / NBRC 0083 / IGC 2968) (Yeast).